Reading from the N-terminus, the 230-residue chain is Ribonuclease 3 (230 aa).

One can recognise an RNase III domain in the interval 8–135 (IVELKEKLGI…LIGAVYLQTN (128 aa)). Residue Glu48 participates in Mg(2+) binding. Residue Asp52 is part of the active site. Mg(2+) is bound by residues Asp121 and Glu124. Glu124 is an active-site residue. Residues 161-230 (DYKTMIQELV…AHFAFQKLSK (70 aa)) form the DRBM domain.

It belongs to the ribonuclease III family. As to quaternary structure, homodimer. The cofactor is Mg(2+).

Its subcellular location is the cytoplasm. The catalysed reaction is Endonucleolytic cleavage to 5'-phosphomonoester.. Digests double-stranded RNA. Involved in the processing of primary rRNA transcript to yield the immediate precursors to the large and small rRNAs (23S and 16S). Processes some mRNAs, and tRNAs when they are encoded in the rRNA operon. Processes pre-crRNA and tracrRNA of type II CRISPR loci if present in the organism. This is Ribonuclease 3 from Natranaerobius thermophilus (strain ATCC BAA-1301 / DSM 18059 / JW/NM-WN-LF).